The sequence spans 187 residues: Ubiquinone biosynthesis protein COQ4 homolog, mitochondrial (187 aa).

Residues His77, Asp78, His81, and Glu93 each coordinate Zn(2+).

It belongs to the COQ4 family. Component of a multi-subunit COQ enzyme complex. The cofactor is Zn(2+).

Its subcellular location is the mitochondrion inner membrane. The enzyme catalyses a 4-hydroxy-3-methoxy-5-(all-trans-polyprenyl)benzoate + H(+) = a 2-methoxy-6-(all-trans-polyprenyl)phenol + CO2. It functions in the pathway cofactor biosynthesis; ubiquinone biosynthesis. Its function is as follows. Lyase that catalyzes the C1-decarboxylation of 4-hydroxy-3-methoxy-5-(all-trans-polyprenyl)benzoic acid into 2-methoxy-6-(all-trans-polyprenyl)phenol during ubiquinone biosynthesis. This chain is Ubiquinone biosynthesis protein COQ4 homolog, mitochondrial, found in Leishmania major.